Reading from the N-terminus, the 103-residue chain is Small ribosomal subunit protein uS14c (103 aa).

It belongs to the universal ribosomal protein uS14 family. As to quaternary structure, part of the 30S ribosomal subunit.

It is found in the plastid. Its subcellular location is the chloroplast. Binds 16S rRNA, required for the assembly of 30S particles. This is Small ribosomal subunit protein uS14c from Oryza nivara (Indian wild rice).